The primary structure comprises 517 residues: MKRWTNLGFVDTIYEDEDYVDHHSSSLSSSSSSLSLSPKQPINLSSSPSMELESRVHKWSLANNSKPDVFVNVGGTRFHLHKDPLSKSGYLKRHLTGVNELTLSPPLNITAETFSLVAGFCYGAHIELTPSNVVSLRIAVEVLLITEADDGGRVRDSLRNLTESYLRRVVFVNVDYIQIVLRSCLLLLPESETTAFLIGRCVEALMEIGDGDCVNEFLEEAVKLPAGDFNVVADAVQQRFPRHDLLYRIVDAYVKEHDGEMTEEEKVQICNSIDCDKLSPPLLLHAVQNPKMPLRFIVRAMLQEQLNTRHSIMVAAVAASCAAPTGVRHREIATEARDSSVTLGSLLQRDTAARQNCRLRAAMNSTSSRIESLEKELDTMKRFLSKESEKQKSDRNIVESRSRSVMDSARSASFHCVHQPSNVNKTQRGDRGSVSNLSTTYRRRRASPPQAQPQKSIGKRLIMGIKNAFSTSSKQVPKKNAYAVEEIYDGLEDFVWIKDDNDDNISEELHSHYIKNK.

Residues 28 to 37 (SSSSSSLSLS) show a composition bias toward low complexity. A disordered region spans residues 28–49 (SSSSSSLSLSPKQPINLSSSPS). Positions 38-49 (PKQPINLSSSPS) are enriched in polar residues. One can recognise a BTB domain in the interval 67–130 (PDVFVNVGGT…CYGAHIELTP (64 aa)). Positions 224 to 307 (LPAGDFNVVA…VRAMLQEQLN (84 aa)) constitute an NPH3 domain. Positions 409-456 (ARSASFHCVHQPSNVNKTQRGDRGSVSNLSTTYRRRRASPPQAQPQKS) are disordered.

Belongs to the NPH3 family.

Its pathway is protein modification; protein ubiquitination. May act as a substrate-specific adapter of an E3 ubiquitin-protein ligase complex (CUL3-RBX1-BTB) which mediates the ubiquitination and subsequent proteasomal degradation of target proteins. The chain is BTB/POZ domain-containing protein At3g49900 from Arabidopsis thaliana (Mouse-ear cress).